The sequence spans 279 residues: Energy-coupling factor transporter ATP-binding protein EcfA1 (279 aa).

An ABC transporter domain is found at 6–240; it reads VEFRNVSFRY…KDALREIGLD (235 aa). 40–47 is a binding site for ATP; sequence GHNGSGKS.

Belongs to the ABC transporter superfamily. Energy-coupling factor EcfA family. Forms a stable energy-coupling factor (ECF) transporter complex composed of 2 membrane-embedded substrate-binding proteins (S component), 2 ATP-binding proteins (A component) and 2 transmembrane proteins (T component).

It is found in the cell membrane. ATP-binding (A) component of a common energy-coupling factor (ECF) ABC-transporter complex. Unlike classic ABC transporters this ECF transporter provides the energy necessary to transport a number of different substrates. This chain is Energy-coupling factor transporter ATP-binding protein EcfA1, found in Oceanobacillus iheyensis (strain DSM 14371 / CIP 107618 / JCM 11309 / KCTC 3954 / HTE831).